Here is a 720-residue protein sequence, read N- to C-terminus: Methionine--tRNA ligase (720 aa).

A 'HIGH' region motif is present at residues Pro-27–His-37. Positions 158, 161, 171, and 174 each coordinate Zn(2+). Residues Lys-348–Ser-352 carry the 'KMSKS' region motif. Lys-351 provides a ligand contact to ATP. The region spanning Asp-614–Lys-720 is the tRNA-binding domain.

This sequence belongs to the class-I aminoacyl-tRNA synthetase family. MetG type 1 subfamily. Homodimer. Zn(2+) is required as a cofactor.

The protein resides in the cytoplasm. The enzyme catalyses tRNA(Met) + L-methionine + ATP = L-methionyl-tRNA(Met) + AMP + diphosphate. In terms of biological role, is required not only for elongation of protein synthesis but also for the initiation of all mRNA translation through initiator tRNA(fMet) aminoacylation. In Burkholderia ambifaria (strain MC40-6), this protein is Methionine--tRNA ligase.